The following is a 602-amino-acid chain: uncharacterized protein (602 aa).

Residues 271–472 (IIDILADILI…RDEEVAKYIF (202 aa)) form the MCM domain. 315 to 322 (TEVGIDKT) contacts ATP.

This sequence belongs to the MCM family.

This is an uncharacterized protein from Methanocaldococcus jannaschii (strain ATCC 43067 / DSM 2661 / JAL-1 / JCM 10045 / NBRC 100440) (Methanococcus jannaschii).